The chain runs to 251 residues: uncharacterized protein (251 aa).

The disordered stretch occupies residues 229 to 251 (TSTETSPEHQADLKDDNSDISST). Positions 234–245 (SPEHQADLKDDN) are enriched in basic and acidic residues.

This is an uncharacterized protein from Acanthamoeba polyphaga (Amoeba).